Reading from the N-terminus, the 198-residue chain is Vacuolar iron transporter homolog 4 (198 aa).

The Cytoplasmic portion of the chain corresponds to 1–32; that stretch reads MESNNNNLNLDMEKDQETTFDYSKRAQWLRAA. The chain crosses the membrane as a helical span at residues 33–53; it reads VLGANDGLVSTASLMMGIGAV. The Vacuolar segment spans residues 54–60; the sequence is KQDVRIM. Residues 61 to 81 traverse the membrane as a helical segment; it reads LLTGFAGLVAGACSMAIGEFI. Residues 82–114 lie on the Cytoplasmic side of the membrane; sequence SVYSQYDIEVAQMKRESGGETKKEKLPSPTQAA. The chain crosses the membrane as a helical span at residues 115-135; sequence IASALAFTLGAIVPLLAAAFV. Over 136 to 141 the chain is Vacuolar; it reads KEYKVR. Residues 142-162 traverse the membrane as a helical segment; that stretch reads IGVIVAAVTLALVMFGWLGAV. The Cytoplasmic segment spans residues 163-174; sequence LGKAPVVKSLVR. The helical transmembrane segment at 175–195 threads the bilayer; sequence VLIGGWLAMAITFGFTKLVGS. Topologically, residues 196 to 198 are vacuolar; sequence HGL.

It belongs to the CCC1 family.

Its subcellular location is the vacuole membrane. It catalyses the reaction Fe(2+)(in) = Fe(2+)(out). Its function is as follows. Probable vacuolar iron transporter that may be involved in the regulation of iron distribution throughout the plant. The chain is Vacuolar iron transporter homolog 4 from Arabidopsis thaliana (Mouse-ear cress).